The sequence spans 109 residues: Insulin (109 aa).

The first 24 residues, 1–24 (MAPWMHLLTVLALLALWGPNSVQA), serve as a signal peptide directing secretion. 3 disulfides stabilise this stretch: Cys-31–Cys-93, Cys-43–Cys-106, and Cys-92–Cys-97. A propeptide spans 56–84 (ELEDLQVEQAELGLEAGGLQPSALEMILQ) (c peptide).

This sequence belongs to the insulin family. In terms of assembly, heterodimer of a B chain and an A chain linked by two disulfide bonds.

It is found in the secreted. In terms of biological role, insulin decreases blood glucose concentration. It increases cell permeability to monosaccharides, amino acids and fatty acids. It accelerates glycolysis, the pentose phosphate cycle, and glycogen synthesis in liver. In Octodon degus (Degu), this protein is Insulin (INS).